Here is a 112-residue protein sequence, read N- to C-terminus: MQLSPQEKDKLLIFTAALVAERRRARGLKLNYPEAVAYISAAILEGAREGRSVEELMSYGTTLLGKDDVMEGVPEMIHEVQIEATFPDGTKLVTVHNPIRLSVVPLVGSSQV.

The protein belongs to the urease gamma subunit family. Heterotrimer of UreA (gamma), UreB (beta) and UreC (alpha) subunits. Three heterotrimers associate to form the active enzyme.

It localises to the cytoplasm. The enzyme catalyses urea + 2 H2O + H(+) = hydrogencarbonate + 2 NH4(+). Its pathway is nitrogen metabolism; urea degradation; CO(2) and NH(3) from urea (urease route): step 1/1. This chain is Urease subunit gamma, found in Gloeothece citriformis (strain PCC 7424) (Cyanothece sp. (strain PCC 7424)).